Reading from the N-terminus, the 639-residue chain is Ubiquitin-like modifier-activating enzyme ATG7 (639 aa).

The GXGXXG motif signature appears at 322 to 327; the sequence is GAGTLG. Residue Cys502 is the Glycyl thioester intermediate of the active site.

This sequence belongs to the ATG7 family. As to quaternary structure, homodimer.

The protein localises to the cytoplasm. The protein resides in the preautophagosomal structure. E1-like activating enzyme involved in the 2 ubiquitin-like systems required for cytoplasm to vacuole transport (Cvt) and autophagy. Activates ATG12 for its conjugation with ATG5 and ATG8 for its conjugation with phosphatidylethanolamine. Both systems are needed for the ATG8 association to Cvt vesicles and autophagosomes membranes. Autophagy is essential for maintenance of amino acid levels and protein synthesis under nitrogen starvation. Required for selective autophagic degradation of the nucleus (nucleophagy) as well as for mitophagy which contributes to regulate mitochondrial quantity and quality by eliminating the mitochondria to a basal level to fulfill cellular energy requirements and preventing excess ROS production. Plays a role in the regulation of filamentous growth and chronological longevity. In Candida albicans (strain SC5314 / ATCC MYA-2876) (Yeast), this protein is Ubiquitin-like modifier-activating enzyme ATG7 (APG7).